The following is a 1164-amino-acid chain: FH1/FH2 domain-containing protein 1 (1164 aa).

Positions 53–458 (AQIPAVHRLL…AAETEKQVAL (406 aa)) constitute a GBD/FH3 domain. 2 disordered regions span residues 340–411 (DIEE…VGPP) and 470–500 (MPNEAGGHPDARQLWDSPETAPAARTPQSPA). Basic and acidic residues predominate over residues 355–368 (KPSSEEGKRSRRSL). Serine 367 is modified (phosphoserine). Residues 402–411 (GPASSPVGPP) are compositionally biased toward low complexity. Serine 486 is modified (phosphoserine). The FH1 domain occupies 487–615 (PETAPAARTP…LAAPLPHSVP (129 aa)). Threonine 495 bears the Phosphothreonine mark. A phosphoserine mark is found at serine 498, serine 523, and serine 573. Residues 566–619 (GKDIPAPSPPLPLLSGVPPPPPLPPPPPIKGPFPPPPPLPLAAPLPHSVPDSSA) form a disordered region. Positions 571-608 (APSPPLPLLSGVPPPPPLPPPPPIKGPFPPPPPLPLAA) are enriched in pro residues. Residues 612–807 (HSVPDSSALP…AEPLFDLKVG (196 aa)) form an interaction with ROCK1 region. The region spanning 616–1013 (DSSALPTKRK…YRERNKTRGR (398 aa)) is the FH2 domain. Threonine 690 is modified (phosphothreonine). The stretch at 884 to 921 (LTRCAKVDFEQLTENLGQLERRSRAAEESLRSLAKHEL) forms a coiled coil. The interval 1020-1143 (KFSGVAGEAP…NRKSLRRTLK (124 aa)) is disordered. Residues 1028–1041 (APSNPSVPVAVSSG) show a composition bias toward low complexity. In terms of domain architecture, DAD spans 1053–1133 (MKSLLTSRPE…AARERKRSRG (81 aa)). The segment covering 1073–1089 (MVQSSSPIMPTVGPSTA) has biased composition (polar residues). The span at 1127–1142 (ERKRSRGNRKSLRRTL) shows a compositional bias: basic residues.

It belongs to the formin homology family. In terms of assembly, self-associates via the FH2 domain. Binds to F-actin via its N-terminus. Binds to the cytoplasmic domain of CD21 via its C-terminus. Interacts with ROCK1 in a Src-dependent manner. Post-translationally, phosphorylated by ROCK1. In terms of tissue distribution, ubiquitous. Highly expressed in spleen.

The protein resides in the cytoplasm. Its subcellular location is the cytoskeleton. It is found in the cell projection. It localises to the bleb. In terms of biological role, required for the assembly of F-actin structures, such as stress fibers. Depends on the Rho-ROCK cascade for its activity. Contributes to the coordination of microtubules with actin fibers and plays a role in cell elongation. Acts synergistically with ROCK1 to promote SRC-dependent non-apoptotic plasma membrane blebbing. This Homo sapiens (Human) protein is FH1/FH2 domain-containing protein 1 (FHOD1).